The primary structure comprises 89 residues: MVMTPEKKMSIIEEYGQHEGDTGSPEVQVALLTARIEYLTEHFKSHKQDYHSRTGLLKLVGQRRNMLKYLAKKDVQRYRALIQKLGLRK.

It belongs to the universal ribosomal protein uS15 family. Part of the 30S ribosomal subunit. Forms a bridge to the 50S subunit in the 70S ribosome, contacting the 23S rRNA.

Its function is as follows. One of the primary rRNA binding proteins, it binds directly to 16S rRNA where it helps nucleate assembly of the platform of the 30S subunit by binding and bridging several RNA helices of the 16S rRNA. In terms of biological role, forms an intersubunit bridge (bridge B4) with the 23S rRNA of the 50S subunit in the ribosome. The polypeptide is Small ribosomal subunit protein uS15 (Oleidesulfovibrio alaskensis (strain ATCC BAA-1058 / DSM 17464 / G20) (Desulfovibrio alaskensis)).